The following is a 783-amino-acid chain: Protein phosphatase 2C 29 (783 aa).

The interval 151-194 (SFSALPLQPGPDRSGLFMSGPIERGATSGPLDPPAGEISRSNSA) is disordered. Ser-199 is modified (phosphoserine). Positions 260 to 770 (SSGENDLQWA…DDCTVLVIAL (511 aa)) constitute a PPM-type phosphatase domain. 2 residues coordinate Mn(2+): Asp-295 and Gly-296. The segment at 555–595 (ETGESVETAERVEERRNDLDRDDGNKEPLVVDSSDSTVNNE) is disordered. Over residues 562–580 (TAERVEERRNDLDRDDGNK) the composition is skewed to basic and acidic residues. Positions 701 and 761 each coordinate Mn(2+).

This sequence belongs to the PP2C family. Mg(2+) serves as cofactor. The cofactor is Mn(2+). Expressed in roots, leaves, stems, inflorescences, flowers and developing vascular tissue.

The protein resides in the nucleus. The enzyme catalyses O-phospho-L-seryl-[protein] + H2O = L-seryl-[protein] + phosphate. It catalyses the reaction O-phospho-L-threonyl-[protein] + H2O = L-threonyl-[protein] + phosphate. Functionally, involved in the regulation of pedicel length and of CLAVATA pathways controlling stem cell identity at shoot and flower meristems. The chain is Protein phosphatase 2C 29 (PLL1) from Arabidopsis thaliana (Mouse-ear cress).